Reading from the N-terminus, the 234-residue chain is Probable transcriptional regulatory protein PSPPH_2212 (234 aa).

This sequence belongs to the TACO1 family.

The protein resides in the cytoplasm. This chain is Probable transcriptional regulatory protein PSPPH_2212, found in Pseudomonas savastanoi pv. phaseolicola (strain 1448A / Race 6) (Pseudomonas syringae pv. phaseolicola (strain 1448A / Race 6)).